Consider the following 83-residue polypeptide: RNA-binding protein Hfq (83 aa).

Residues 10 to 70 (DTFLNQVRKE…ISTVMPLRPI (61 aa)) form the Sm domain.

Belongs to the Hfq family. As to quaternary structure, homohexamer.

Functionally, RNA chaperone that binds small regulatory RNA (sRNAs) and mRNAs to facilitate mRNA translational regulation in response to envelope stress, environmental stress and changes in metabolite concentrations. Also binds with high specificity to tRNAs. In Desulfitobacterium hafniense (strain DSM 10664 / DCB-2), this protein is RNA-binding protein Hfq.